Here is a 1010-residue protein sequence, read N- to C-terminus: Protein translocase subunit SecA (1010 aa).

ATP-binding positions include glutamine 86, 104 to 108 (GEGKT), and aspartate 535. The span at 893–904 (QAGAADGNAKGA) shows a compositional bias: low complexity. A disordered region spans residues 893–916 (QAGAADGNAKGARTVRHSVRLPGR). 4 residues coordinate Zn(2+): cysteine 920, cysteine 922, cysteine 931, and histidine 932. Low complexity predominate over residues 950 to 981 (QHAAVAADTPAQPAPQATATRPPTSQVPRGRA). A disordered region spans residues 950–1010 (QHAAVAADTP…RGKGASARKK (61 aa)).

This sequence belongs to the SecA family. In terms of assembly, monomer and homodimer. Part of the essential Sec protein translocation apparatus which comprises SecA, SecYEG and auxiliary proteins SecDF. Other proteins may also be involved. Requires Zn(2+) as cofactor.

The protein resides in the cell membrane. It localises to the cytoplasm. The catalysed reaction is ATP + H2O + cellular proteinSide 1 = ADP + phosphate + cellular proteinSide 2.. Part of the Sec protein translocase complex. Interacts with the SecYEG preprotein conducting channel. Has a central role in coupling the hydrolysis of ATP to the transfer of proteins into and across the cell membrane, serving as an ATP-driven molecular motor driving the stepwise translocation of polypeptide chains across the membrane. The protein is Protein translocase subunit SecA of Roseiflexus sp. (strain RS-1).